A 171-amino-acid chain; its full sequence is O-acetyl-ADP-ribose deacetylase 1 (171 aa).

Residues 1–171 (MKKITVIQGD…NYDLYLKLLN (171 aa)) enclose the Macro domain. Residues 10–11 (DI), asparagine 24, 32–34 (GVD), and 121–125 (STGIY) each bind substrate. The active-site Proton acceptor is the aspartate 34.

Belongs to the MacroD-type family. YmdB subfamily. Homodimer. Interacts with RNase III.

It catalyses the reaction 3''-O-acetyl-ADP-D-ribose + H2O = ADP-D-ribose + acetate + H(+). The catalysed reaction is 2''-O-acetyl-ADP-D-ribose + H2O = ADP-D-ribose + acetate + H(+). Functionally, deacetylates O-acetyl-ADP ribose to yield ADP-ribose and free acetate. Down-regulates ribonuclease 3 (RNase III) activity. Acts by interacting directly with the region of the ribonuclease that is required for dimerization/activation. The polypeptide is O-acetyl-ADP-ribose deacetylase 1 (Pantoea vagans (strain C9-1) (Pantoea agglomerans (strain C9-1))).